The primary structure comprises 844 residues: Meiotically up-regulated gene 61 protein (844 aa).

2 disordered regions span residues 333–354 (ENNSFSWTHPKKNSSSPLPQSQ) and 384–415 (NFGLEASNTSTPEKKKFDSQKPDDDSVNEISS). Positions 384-394 (NFGLEASNTST) are enriched in polar residues. Basic and acidic residues predominate over residues 395 to 407 (PEKKKFDSQKPDD). A helical transmembrane segment spans residues 459-479 (VVNSLWLVLLVVPLLGFVGFW). ATP is bound at residue 605–612 (AKNLNGKS). A helical transmembrane segment spans residues 705–725 (VISCWRIYLLIGILAAITGTV).

Interacts with sad1.

The protein localises to the endoplasmic reticulum membrane. Its subcellular location is the nucleus membrane. In terms of biological role, required for correct meiotic chromosome segregation. The chain is Meiotically up-regulated gene 61 protein (mug61) from Schizosaccharomyces pombe (strain 972 / ATCC 24843) (Fission yeast).